Reading from the N-terminus, the 249-residue chain is tRNA (guanine-N(1)-)-methyltransferase (249 aa).

S-adenosyl-L-methionine contacts are provided by residues G117 and 137–142 (LGDFVL).

Belongs to the RNA methyltransferase TrmD family. In terms of assembly, homodimer.

Its subcellular location is the cytoplasm. The enzyme catalyses guanosine(37) in tRNA + S-adenosyl-L-methionine = N(1)-methylguanosine(37) in tRNA + S-adenosyl-L-homocysteine + H(+). Its function is as follows. Specifically methylates guanosine-37 in various tRNAs. The polypeptide is tRNA (guanine-N(1)-)-methyltransferase (Janthinobacterium sp. (strain Marseille) (Minibacterium massiliensis)).